The sequence spans 347 residues: tRNA pseudouridine synthase D (347 aa).

The Nucleophile role is filled by Asp-81. Residues 158-304 (GVPNYFGNQR…MRHDRRAIAL (147 aa)) enclose the TRUD domain.

This sequence belongs to the pseudouridine synthase TruD family.

The catalysed reaction is uridine(13) in tRNA = pseudouridine(13) in tRNA. In terms of biological role, responsible for synthesis of pseudouridine from uracil-13 in transfer RNAs. The chain is tRNA pseudouridine synthase D from Vibrio vulnificus (strain CMCP6).